Here is an 896-residue protein sequence, read N- to C-terminus: Serine/threonine-protein kinase TAO3 (896 aa).

In terms of domain architecture, Protein kinase spans 24–277; sequence FVDLHEIGHG…SLELLRHDFV (254 aa). ATP-binding positions include 30–38 and lysine 53; that span reads IGHGSFGAV. The active-site Proton acceptor is aspartate 147. 2 disordered regions span residues 316–366 and 403–423; these read SRNG…SVNS and DEAD…VQSQ. Over residues 334-348 the composition is skewed to polar residues; that stretch reads GTSLTRKMDSLGSNH. A compositionally biased stretch (low complexity) spans 349–366; the sequence is SIPSTSVSTGSQSSSVNS. A compositionally biased stretch (basic and acidic residues) spans 403 to 414; the sequence is DEADHRDPRPEL. Coiled coils occupy residues 450–513, 545–650, and 752–873; these read EQEN…SKRQ, SFLE…LIRQ, and LKSL…IETF. The segment covering 565-587 has biased composition (basic and acidic residues); sequence LNEDHSTPKKEKQERISKHKENL. Residues 565-593 form a disordered region; that stretch reads LNEDHSTPKKEKQERISKHKENLQHTQAE.

It belongs to the protein kinase superfamily. STE Ser/Thr protein kinase family. STE20 subfamily.

Its subcellular location is the cytoplasm. The protein localises to the cell membrane. The protein resides in the membrane raft. It localises to the lipid droplet. It carries out the reaction L-seryl-[protein] + ATP = O-phospho-L-seryl-[protein] + ADP + H(+). The catalysed reaction is L-threonyl-[protein] + ATP = O-phospho-L-threonyl-[protein] + ADP + H(+). Serine/threonine-protein kinase that acts as a regulator of the p38/MAPK14 stress-activated MAPK cascade and of the MAPK8/JNK cascade. In response to DNA damage, involved in the G2/M transition DNA damage checkpoint by activating the p38/MAPK14 stress-activated MAPK cascade, probably by mediating phosphorylation of upstream MAP kinase kinases. Inhibits basal activity of the MAPK8/JNK cascade. The polypeptide is Serine/threonine-protein kinase TAO3 (taok3) (Xenopus laevis (African clawed frog)).